We begin with the raw amino-acid sequence, 726 residues long: MAQTVQNVTLSLTLPITCHICLGKVRQPVICINNHVFCSICIDLWLKNNSQCPACRVPITPENPCKEIIGGTSESEPMLSHTVRKHLRKTRLELLHKEYEDEIDCLQKEVEELKSKNLSLESQIKTILDPLTLVQGNQNEDKHLVTDNPSKINPETVAEWKKKLRTANEIYEKVKDDVDKLKEANKKLKLENGGLVRENLRLKAEVDNRSPQKFGRFAVAALQSKVEQYERETSRLKKALERSDKYIEELESQVAQLKNSSEEKEAMNSICQTALPADGKGSKGSEEDVASKNQGDSARKQPSSSTSSSSHLAKPSSSRLCDTSSARQESTSKAELNCSKNKDLYQEQVEVMLDVTDTSMDTYLEREWGNKPSDCVPYKDEELYDLPAPCTPLSLSCLQLSTPENRESPVVQAGGSKKHSNHLRKLVFDDFCDSSNVSNKDSSEDDISRSENEKKSECFSSPKTAFWDCCSTSYAQNLDFESSEGNTIANSVGEISSKLSEKSGSCVSKRLNSIRSFEMNRTRTSSEASMDAAYLDKISELDSMMSESDNSKSPCNNGFKSLDLDGLSKSSQGSEFLEEPDKLEEKTELNLSKGSLTNDQLENGSEWKPTSFFLLSPSDQEMNEDFSLHSSSCPVTNEIKPPSCLFQTEFSQGILLSSSHRLFEDQRFGSSLFKMSSEMHSLHNHLQSPWSTSFVPEKRNKNVNQSTKRKIQSSLSNASPSKATKS.

The RING-type; degenerate zinc finger occupies 18–56 (CHICLGKVRQPVICINNHVFCSICIDLWLKNNSQCPACR). Coiled coils occupy residues 87–129 (LRKT…TILD) and 155–270 (ETVA…MNSI). Serine 210 is subject to Phosphoserine. Residues 274 to 335 (ALPADGKGSK…ARQESTSKAE (62 aa)) are disordered. Over residues 280 to 290 (KGSKGSEEDVA) the composition is skewed to basic and acidic residues. The segment covering 300–320 (KQPSSSTSSSSHLAKPSSSRL) has biased composition (low complexity). Over residues 321–334 (CDTSSARQESTSKA) the composition is skewed to polar residues. 7 positions are modified to phosphoserine: serine 526, serine 553, serine 561, serine 568, serine 570, serine 719, and serine 721. Residues 687–726 (QSPWSTSFVPEKRNKNVNQSTKRKIQSSLSNASPSKATKS) form a disordered region. The segment covering 702–726 (NVNQSTKRKIQSSLSNASPSKATKS) has biased composition (polar residues).

As to quaternary structure, associates with ORC complex. Binds to chromatin; association is cell cycle-regulated, absent from mitotic chromosomes, is associated with chromatin from G1 and partially released from chromatin from mid S-phase. Post-translationally, auto-ubiquitinated.

It localises to the chromosome. It carries out the reaction S-ubiquitinyl-[E2 ubiquitin-conjugating enzyme]-L-cysteine + [acceptor protein]-L-lysine = [E2 ubiquitin-conjugating enzyme]-L-cysteine + N(6)-ubiquitinyl-[acceptor protein]-L-lysine.. Functionally, E3 ubiquitin ligase essential for DNA replication origin activation during S phase. Acts as a replication origin selector which selects the origins to be fired and catalyzes the multi-mono-ubiquitination of a subset of chromatin-bound ORC3 and ORC5 during S-phase. In Pongo abelii (Sumatran orangutan), this protein is ORC ubiquitin ligase 1 (OBI1).